Consider the following 251-residue polypeptide: Carbohydrate deacetylase (251 aa).

2 residues coordinate Mg(2+): H59 and H122.

Belongs to the YdjC deacetylase family. Homodimer. Mg(2+) serves as cofactor.

In terms of biological role, probably catalyzes the deacetylation of acetylated carbohydrates an important step in the degradation of oligosaccharides. The protein is Carbohydrate deacetylase of Vibrio parahaemolyticus serotype O3:K6 (strain RIMD 2210633).